Consider the following 215-residue polypeptide: Heart- and neural crest derivatives-expressed protein 1 (215 aa).

2 disordered regions span residues 53–109 and 169–202; these read APDF…RTES and VDGG…KGRT. The segment covering 65-75 has biased composition (low complexity); sequence AAAAAATYGPD. Positions 92 to 104 are enriched in basic residues; it reads LGRRKGSGPKKER. The bHLH domain occupies 94–146; that stretch reads RRKGSGPKKERRRTESINSAFAELRECIPNVPADTKLSKIKTLRLATSYIAYL. Phosphothreonine; by PLK4 is present on Thr107. At Ser109 the chain carries Phosphoserine; by PLK4.

As to quaternary structure, efficient DNA binding requires dimerization with another bHLH protein. Forms homodimers and heterodimers with TCF3 gene products E12 and E47, HAND2 and HEY1, HEY2 and HEYL (hairy-related transcription factors). Interacts with MDFIC. Interacts with SOX15; the interaction enhances HAND1-induced differentiation of trophoblast giant cells. Post-translationally, phosphorylation by PLK4 disrupts the interaction with MDFIC and leads to translocation into the nucleoplasm, allowing dimerization and transcription factor activity.

It localises to the nucleus. It is found in the nucleoplasm. Its subcellular location is the nucleolus. Transcription factor that plays an essential role in both trophoblast giant cell differentiation and in cardiac morphogenesis. Binds the DNA sequence 5'-NRTCTG-3' (non-canonical E-box). Acts as a transcriptional repressor of SOX15. In the adult, could be required for ongoing expression of cardiac-specific genes. The protein is Heart- and neural crest derivatives-expressed protein 1 (HAND1) of Oryctolagus cuniculus (Rabbit).